Here is an 87-residue protein sequence, read N- to C-terminus: Cell division topological specificity factor (87 aa).

The protein belongs to the MinE family.

Prevents the cell division inhibition by proteins MinC and MinD at internal division sites while permitting inhibition at polar sites. This ensures cell division at the proper site by restricting the formation of a division septum at the midpoint of the long axis of the cell. The protein is Cell division topological specificity factor of Chelativorans sp. (strain BNC1).